The sequence spans 35 residues: Dermonecrotic toxin LdSicTox-alpha-1 (35 aa).

Residue H11 is part of the active site. Positions 31 and 33 each coordinate Mg(2+).

This sequence belongs to the arthropod phospholipase D family. Class I subfamily. The cofactor is Mg(2+). Contains 1 disulfide bond. Expressed by the venom gland.

Its subcellular location is the secreted. The catalysed reaction is an N-(acyl)-sphingosylphosphocholine = an N-(acyl)-sphingosyl-1,3-cyclic phosphate + choline. The enzyme catalyses an N-(acyl)-sphingosylphosphoethanolamine = an N-(acyl)-sphingosyl-1,3-cyclic phosphate + ethanolamine. It catalyses the reaction a 1-acyl-sn-glycero-3-phosphocholine = a 1-acyl-sn-glycero-2,3-cyclic phosphate + choline. It carries out the reaction a 1-acyl-sn-glycero-3-phosphoethanolamine = a 1-acyl-sn-glycero-2,3-cyclic phosphate + ethanolamine. Dermonecrotic toxins cleave the phosphodiester linkage between the phosphate and headgroup of certain phospholipids (sphingolipid and lysolipid substrates), forming an alcohol (often choline) and a cyclic phosphate. This toxin acts on sphingomyelin (SM). It may also act on ceramide phosphoethanolamine (CPE), lysophosphatidylcholine (LPC) and lysophosphatidylethanolamine (LPE), but not on lysophosphatidylserine (LPS), and lysophosphatidylglycerol (LPG). It acts by transphosphatidylation, releasing exclusively cyclic phosphate products as second products. Induces dermonecrosis, hemolysis, increased vascular permeability, edema, inflammatory response, and platelet aggregation. The protein is Dermonecrotic toxin LdSicTox-alpha-1 of Loxosceles deserta (Desert recluse spider).